Consider the following 417-residue polypeptide: Serine hydroxymethyltransferase (417 aa).

(6S)-5,6,7,8-tetrahydrofolate contacts are provided by residues leucine 121 and 125-127; that span reads GHL. An N6-(pyridoxal phosphate)lysine modification is found at lysine 229. 355 to 357 serves as a coordination point for (6S)-5,6,7,8-tetrahydrofolate; sequence SPF.

Belongs to the SHMT family. Homodimer. The cofactor is pyridoxal 5'-phosphate.

Its subcellular location is the cytoplasm. It catalyses the reaction (6R)-5,10-methylene-5,6,7,8-tetrahydrofolate + glycine + H2O = (6S)-5,6,7,8-tetrahydrofolate + L-serine. It functions in the pathway one-carbon metabolism; tetrahydrofolate interconversion. It participates in amino-acid biosynthesis; glycine biosynthesis; glycine from L-serine: step 1/1. Catalyzes the reversible interconversion of serine and glycine with tetrahydrofolate (THF) serving as the one-carbon carrier. This reaction serves as the major source of one-carbon groups required for the biosynthesis of purines, thymidylate, methionine, and other important biomolecules. Also exhibits THF-independent aldolase activity toward beta-hydroxyamino acids, producing glycine and aldehydes, via a retro-aldol mechanism. The sequence is that of Serine hydroxymethyltransferase from Shewanella baltica (strain OS185).